Here is a 180-residue protein sequence, read N- to C-terminus: Large ribosomal subunit protein uL5 (180 aa).

It belongs to the universal ribosomal protein uL5 family. Part of the 50S ribosomal subunit; part of the 5S rRNA/L5/L18/L25 subcomplex. Contacts the 5S rRNA and the P site tRNA. Forms a bridge to the 30S subunit in the 70S ribosome.

In terms of biological role, this is one of the proteins that bind and probably mediate the attachment of the 5S RNA into the large ribosomal subunit, where it forms part of the central protuberance. In the 70S ribosome it contacts protein S13 of the 30S subunit (bridge B1b), connecting the 2 subunits; this bridge is implicated in subunit movement. Contacts the P site tRNA; the 5S rRNA and some of its associated proteins might help stabilize positioning of ribosome-bound tRNAs. This Chlamydia abortus (strain DSM 27085 / S26/3) (Chlamydophila abortus) protein is Large ribosomal subunit protein uL5.